Consider the following 485-residue polypeptide: tRNA sulfurtransferase (485 aa).

Residues Glu61 to Arg165 form the THUMP domain. Residues Leu183–Ile184, Lys265, Gly287, and Gln296 contribute to the ATP site. Cys344 and Cys456 are oxidised to a cystine. Positions Leu404–Asn483 constitute a Rhodanese domain. Cys456 (cysteine persulfide intermediate) is an active-site residue.

This sequence belongs to the ThiI family.

It is found in the cytoplasm. It catalyses the reaction [ThiI sulfur-carrier protein]-S-sulfanyl-L-cysteine + a uridine in tRNA + 2 reduced [2Fe-2S]-[ferredoxin] + ATP + H(+) = [ThiI sulfur-carrier protein]-L-cysteine + a 4-thiouridine in tRNA + 2 oxidized [2Fe-2S]-[ferredoxin] + AMP + diphosphate. It carries out the reaction [ThiS sulfur-carrier protein]-C-terminal Gly-Gly-AMP + S-sulfanyl-L-cysteinyl-[cysteine desulfurase] + AH2 = [ThiS sulfur-carrier protein]-C-terminal-Gly-aminoethanethioate + L-cysteinyl-[cysteine desulfurase] + A + AMP + 2 H(+). It functions in the pathway cofactor biosynthesis; thiamine diphosphate biosynthesis. In terms of biological role, catalyzes the ATP-dependent transfer of a sulfur to tRNA to produce 4-thiouridine in position 8 of tRNAs, which functions as a near-UV photosensor. Also catalyzes the transfer of sulfur to the sulfur carrier protein ThiS, forming ThiS-thiocarboxylate. This is a step in the synthesis of thiazole, in the thiamine biosynthesis pathway. The sulfur is donated as persulfide by IscS. The polypeptide is tRNA sulfurtransferase (Haemophilus influenzae (strain PittGG)).